A 33-amino-acid polypeptide reads, in one-letter code: Photosystem II reaction center protein Psb30 (33 aa).

A helical membrane pass occupies residues 5-25 (LIVQLGSLTLITIAGPLIVAL).

It belongs to the Psb30/Ycf12 family. In terms of assembly, PSII is composed of 1 copy each of membrane proteins PsbA, PsbB, PsbC, PsbD, PsbE, PsbF, PsbH, PsbI, PsbJ, PsbK, PsbL, PsbM, PsbT, PsbY, PsbZ, Psb30/Ycf12, peripheral proteins of the oxygen-evolving complex and a large number of cofactors. It forms dimeric complexes.

Its subcellular location is the plastid. The protein resides in the chloroplast thylakoid membrane. In terms of biological role, a core subunit of photosystem II (PSII), probably helps stabilize the reaction center. The sequence is that of Photosystem II reaction center protein Psb30 from Euglena mutabilis.